A 156-amino-acid chain; its full sequence is ATP synthase subunit b (156 aa).

Residues 7 to 27 traverse the membrane as a helical segment; sequence LIGQTVAFIIFVWFCMKFVWP.

The protein belongs to the ATPase B chain family. In terms of assembly, F-type ATPases have 2 components, F(1) - the catalytic core - and F(0) - the membrane proton channel. F(1) has five subunits: alpha(3), beta(3), gamma(1), delta(1), epsilon(1). F(0) has three main subunits: a(1), b(2) and c(10-14). The alpha and beta chains form an alternating ring which encloses part of the gamma chain. F(1) is attached to F(0) by a central stalk formed by the gamma and epsilon chains, while a peripheral stalk is formed by the delta and b chains.

It localises to the cell inner membrane. F(1)F(0) ATP synthase produces ATP from ADP in the presence of a proton or sodium gradient. F-type ATPases consist of two structural domains, F(1) containing the extramembraneous catalytic core and F(0) containing the membrane proton channel, linked together by a central stalk and a peripheral stalk. During catalysis, ATP synthesis in the catalytic domain of F(1) is coupled via a rotary mechanism of the central stalk subunits to proton translocation. Its function is as follows. Component of the F(0) channel, it forms part of the peripheral stalk, linking F(1) to F(0). This Shewanella sp. (strain ANA-3) protein is ATP synthase subunit b.